Here is a 381-residue protein sequence, read N- to C-terminus: E3 ubiquitin-protein ligase RNF13 (381 aa).

The signal sequence occupies residues 1-34; that stretch reads MLLSIGMLMLSATQVYTILTVQLFAFLNLLPVEA. Topologically, residues 35-182 are lumenal; it reads DILAYNFENA…VPELSLPLEY (148 aa). Residues 64–160 form the PA domain; that stretch reads LKGFLINSKP…GESSANSLKD (97 aa). A glycan (N-linked (GlcNAc...) asparagine) is linked at asparagine 88. Residues 183–203 form a helical membrane-spanning segment; it reads YLIPFLIIVGICLILIVIFMI. Topologically, residues 204–381 are cytoplasmic; the sequence is TKFVQDRHRN…EQDYNIANTV (178 aa). An RING-type; atypical zinc finger spans residues 240–282; that stretch reads CAICLEEYEDGDKLRILPCSHAYHCKCVDPWLTKTKKTCPVCK. The interval 285-381 is disordered; sequence VVPSQGDSDS…EQDYNIANTV (97 aa). Polar residues predominate over residues 317–328; that stretch reads SARTQSFGSLSE. Acidic residues predominate over residues 339-357; the sequence is SDYEDDDNEETDSSDADNE. The span at 365 to 381 shows a compositional bias: polar residues; it reads VQLQPNGEQDYNIANTV.

In terms of assembly, interacts with ERN1. Post-translationally, autoubiquitinated. In terms of processing, N-glycosylated and also modified with chondroitin sulfate. In terms of tissue distribution, expressed in the brain, heart, kidney, liver and spleen. Higher expression in adult tissues compared to the embryonic counterparts.

The protein resides in the endoplasmic reticulum membrane. It is found in the late endosome membrane. The protein localises to the lysosome membrane. Its subcellular location is the nucleus inner membrane. It carries out the reaction S-ubiquitinyl-[E2 ubiquitin-conjugating enzyme]-L-cysteine + [acceptor protein]-L-lysine = [E2 ubiquitin-conjugating enzyme]-L-cysteine + N(6)-ubiquitinyl-[acceptor protein]-L-lysine.. The protein operates within protein modification; protein ubiquitination. Its function is as follows. E3 ubiquitin-protein ligase that regulates cell proliferation. Involved in apoptosis regulation. Mediates ER stress-induced activation of JNK signaling pathway and apoptosis by promoting ERN1 activation and splicing of XBP1 mRNA. Also involved in protein trafficking and localization. In Mus musculus (Mouse), this protein is E3 ubiquitin-protein ligase RNF13 (Rnf13).